Here is a 71-residue protein sequence, read N- to C-terminus: Sodium channel neurotoxin MeuNaTxalpha-12 (71 aa).

The N-terminal stretch at 1–6 (MTGVES) is a signal peptide. An LCN-type CS-alpha/beta domain is found at 8–70 (RDAYIAQGNN…VPIRIQGKCQ (63 aa)). Intrachain disulfides connect Cys-18–Cys-69, Cys-22–Cys-42, Cys-28–Cys-52, and Cys-32–Cys-54. A propeptide (removed by a carboxypeptidase) is located at residue Arg-71.

Belongs to the long (4 C-C) scorpion toxin superfamily. Sodium channel inhibitor family. Alpha subfamily. Expressed by the venom gland.

Its subcellular location is the secreted. Alpha toxins bind voltage-independently at site-3 of sodium channels (Nav) and inhibit the inactivation of the activated channels, thereby blocking neuronal transmission. This chain is Sodium channel neurotoxin MeuNaTxalpha-12, found in Mesobuthus eupeus (Lesser Asian scorpion).